A 413-amino-acid polypeptide reads, in one-letter code: Serine/threonine transporter SstT (413 aa).

A run of 9 helical transmembrane segments spans residues 15-35 (NIVI…TLAP), 48-68 (FVSA…AASI), 82-102 (VIVL…VMSF), 141-161 (ALMT…GLGL), 178-198 (CISA…FGLV), 216-236 (LLAV…PLIV), 290-310 (IPLG…VLTL), 330-350 (LVAA…LLLI), and 357-377 (FGIS…IGVV).

This sequence belongs to the dicarboxylate/amino acid:cation symporter (DAACS) (TC 2.A.23) family.

The protein localises to the cell inner membrane. The catalysed reaction is L-serine(in) + Na(+)(in) = L-serine(out) + Na(+)(out). It catalyses the reaction L-threonine(in) + Na(+)(in) = L-threonine(out) + Na(+)(out). Its function is as follows. Involved in the import of serine and threonine into the cell, with the concomitant import of sodium (symport system). The protein is Serine/threonine transporter SstT of Aliivibrio fischeri (strain ATCC 700601 / ES114) (Vibrio fischeri).